A 574-amino-acid chain; its full sequence is Ribonuclease Y (574 aa).

The helical transmembrane segment at 1–21 threads the bilayer; sequence MSLLDLVLLLLVLGLGGVLLL. The KH domain occupies 264–327; that stretch reads AVTVVPIPSD…EIARMALEEL (64 aa). The HD domain occupies 390 to 483; sequence VLKHSIQVAH…VAAADALSAA (94 aa).

Belongs to the RNase Y family.

The protein localises to the cell membrane. Functionally, endoribonuclease that initiates mRNA decay. This chain is Ribonuclease Y, found in Thermus thermophilus (strain ATCC 27634 / DSM 579 / HB8).